The primary structure comprises 143 residues: MERVNKLCVAFFVINMMMAVAAAQSATNVRATYHLYNPQNINWDLRTASVYCATWDADKPLEWRRRYGWTAFCGPAGPTGQASCGRCLRVTNTGTGTQETVRIVDQCRNGGLDLDVNVFNRLDTNGLGYQRGNLNVNYEFVNC.

The N-terminal stretch at 1-23 is a signal peptide; it reads MERVNKLCVAFFVINMMMAVAAA. The Barwin domain maps to 24–143; the sequence is QSATNVRATY…LNVNYEFVNC (120 aa). Cystine bridges form between C52/C84, C73/C107, and C87/C143.

The protein localises to the secreted. It localises to the cell wall. The polypeptide is Pathogenesis-related protein P2 (Solanum lycopersicum (Tomato)).